Consider the following 421-residue polypeptide: Serine hydroxymethyltransferase (421 aa).

Residues leucine 121 and glycine 125 to leucine 127 each bind (6S)-5,6,7,8-tetrahydrofolate. An N6-(pyridoxal phosphate)lysine modification is found at lysine 230. Position 355-357 (serine 355–phenylalanine 357) interacts with (6S)-5,6,7,8-tetrahydrofolate.

Belongs to the SHMT family. In terms of assembly, homodimer. The cofactor is pyridoxal 5'-phosphate.

The protein localises to the cytoplasm. It catalyses the reaction (6R)-5,10-methylene-5,6,7,8-tetrahydrofolate + glycine + H2O = (6S)-5,6,7,8-tetrahydrofolate + L-serine. The protein operates within one-carbon metabolism; tetrahydrofolate interconversion. It functions in the pathway amino-acid biosynthesis; glycine biosynthesis; glycine from L-serine: step 1/1. Functionally, catalyzes the reversible interconversion of serine and glycine with tetrahydrofolate (THF) serving as the one-carbon carrier. This reaction serves as the major source of one-carbon groups required for the biosynthesis of purines, thymidylate, methionine, and other important biomolecules. Also exhibits THF-independent aldolase activity toward beta-hydroxyamino acids, producing glycine and aldehydes, via a retro-aldol mechanism. The sequence is that of Serine hydroxymethyltransferase from Cellvibrio japonicus (strain Ueda107) (Pseudomonas fluorescens subsp. cellulosa).